A 118-amino-acid polypeptide reads, in one-letter code: Thioredoxin H5 (118 aa).

Ala-2 carries the post-translational modification N-acetylalanine. Residues 2–113 (AGEGEVIACH…INEKLMKHGG (112 aa)) enclose the Thioredoxin domain. Catalysis depends on nucleophile residues Cys-39 and Cys-42. Cys-39 and Cys-42 are disulfide-bonded.

It belongs to the thioredoxin family. Plant H-type subfamily. In terms of assembly, interacts with MDH1.

It localises to the cytoplasm. In terms of biological role, thiol-disulfide oxidoreductase involved in response to pathogens and oxidative stresses. Required for the response to victorin, a phytotoxin which induces programmed cell death in sensitive plants. Possesses insulin disulfide bonds reducing activity. The chain is Thioredoxin H5 (TRX5) from Arabidopsis thaliana (Mouse-ear cress).